The sequence spans 92 residues: Small ribosomal subunit protein uS19c (92 aa).

It belongs to the universal ribosomal protein uS19 family.

It is found in the plastid. It localises to the chloroplast. Its function is as follows. Protein S19 forms a complex with S13 that binds strongly to the 16S ribosomal RNA. The protein is Small ribosomal subunit protein uS19c of Cyanidium caldarium (Red alga).